We begin with the raw amino-acid sequence, 505 residues long: Keratin, type II cuticular Hb1 (505 aa).

Positions 1–106 (MTCGSGFGGR…PNAQCVKQEE (106 aa)) are head. In terms of domain architecture, IF rod spans 106 to 417 (EKEQIKSLNS…RLLEGEEQRL (312 aa)). The segment at 107–141 (KEQIKSLNSRFAAFIDKVRFLEQQNKLLETKLQFY) is coil 1A. Residues 142 to 151 (QNRECCQSNL) form a linker 1 region. The segment at 152 to 252 (EPLFEGYIET…YEEEILILQS (101 aa)) is coil 1B. Lysine 212 is covalently cross-linked (Glycyl lysine isopeptide (Lys-Gly) (interchain with G-Cter in SUMO1)). Residues 253-269 (HISDTSVVVKLDNSRDL) are linker 12. Positions 270 to 413 (NMDCIIAEIK…ATYRRLLEGE (144 aa)) are coil 2. The segment at 414–505 (EQRLCEGIGA…GSCGSSCRKC (92 aa)) is tail.

Belongs to the intermediate filament family. As to quaternary structure, heterotetramer of two type I and two type II keratins. Abundantly expressed in the differentiating cortex of growing (anagen) hair. Expression is restricted to the keratinocytes of the hair cortex and is absent from inner root sheath and medulla. Expressed in malignant lymph node tissue in breast carcinoma tissue.

This is Keratin, type II cuticular Hb1 (KRT81) from Homo sapiens (Human).